The following is a 228-amino-acid chain: Large ribosomal subunit protein bL25 (228 aa).

The segment at 196-228 (EEAAVAEAQSAESAEGKAEAEAEATNEKNKSEA) is disordered. Residues 209–228 (AEGKAEAEAEATNEKNKSEA) show a composition bias toward basic and acidic residues.

This sequence belongs to the bacterial ribosomal protein bL25 family. CTC subfamily. Part of the 50S ribosomal subunit; part of the 5S rRNA/L5/L18/L25 subcomplex. Contacts the 5S rRNA. Binds to the 5S rRNA independently of L5 and L18.

Its function is as follows. This is one of the proteins that binds to the 5S RNA in the ribosome where it forms part of the central protuberance. The sequence is that of Large ribosomal subunit protein bL25 from Methylorubrum extorquens (strain CM4 / NCIMB 13688) (Methylobacterium extorquens).